The chain runs to 79 residues: Ferredoxin (79 aa).

4Fe-4S ferredoxin-type domains follow at residues 2 to 30 and 31 to 60; these read PHVI…YDGG and DQFY…PEED. Residues Cys9 and Cys17 each coordinate [3Fe-4S] cluster. Cys21, Cys40, Cys43, and Cys46 together coordinate [4Fe-4S] cluster. Cys50 contacts [3Fe-4S] cluster.

[4Fe-4S] cluster is required as a cofactor. [3Fe-4S] cluster serves as cofactor.

Ferredoxins are iron-sulfur proteins that transfer electrons in a wide variety of metabolic reactions. The polypeptide is Ferredoxin (Thermus thermophilus (strain ATCC 27634 / DSM 579 / HB8)).